The chain runs to 352 residues: Putative pectinesterase 11 (352 aa).

The helical transmembrane segment at 13–35 (ANYHHIIIINIFILSSITSSSMA) threads the bilayer. A glycan (N-linked (GlcNAc...) asparagine) is linked at Asn-76. Asp-175 serves as the catalytic Proton donor. The active-site Nucleophile is Asp-196. N-linked (GlcNAc...) asparagine glycosylation is present at Asn-218. Substrate is bound by residues Arg-252 and Trp-254. The tract at residues 332–352 (LRPAPSHFKNAPKQTQNKEIN) is disordered. A compositionally biased stretch (polar residues) spans 343 to 352 (PKQTQNKEIN).

The protein belongs to the pectinesterase family.

The protein resides in the membrane. It catalyses the reaction [(1-&gt;4)-alpha-D-galacturonosyl methyl ester](n) + n H2O = [(1-&gt;4)-alpha-D-galacturonosyl](n) + n methanol + n H(+). Its pathway is glycan metabolism; pectin degradation; 2-dehydro-3-deoxy-D-gluconate from pectin: step 1/5. Acts in the modification of cell walls via demethylesterification of cell wall pectin. This is Putative pectinesterase 11 (PME11) from Arabidopsis thaliana (Mouse-ear cress).